The chain runs to 271 residues: uncharacterized protein (271 aa).

Positions 1-22 (MIHSKRLKLCLCLIILSVFIGA) are cleaved as a signal peptide. Cysteine 23 carries the N-palmitoyl cysteine lipid modification. A lipid anchor (S-diacylglycerol cysteine) is attached at cysteine 23.

Belongs to the staphylococcal tandem lipoprotein family.

Its subcellular location is the cell membrane. This is an uncharacterized protein from Staphylococcus aureus (strain MW2).